The following is a 662-amino-acid chain: Probable lysophospholipase 3 (662 aa).

Residues 1 to 19 (MLFNCFGILALLQILPALA) form the signal peptide. N-linked (GlcNAc...) asparagine glycans are attached at residues asparagine 74, asparagine 127, asparagine 162, asparagine 196, asparagine 266, asparagine 274, asparagine 303, asparagine 376, asparagine 406, asparagine 411, asparagine 483, asparagine 518, asparagine 523, asparagine 547, asparagine 556, asparagine 574, asparagine 596, and asparagine 613. One can recognise a PLA2c domain in the interval 76–617 (TCPSDYMLRP…EQYCWNGTTV (542 aa)).

The protein belongs to the lysophospholipase family.

Its subcellular location is the secreted. The enzyme catalyses a 1-acyl-sn-glycero-3-phosphocholine + H2O = sn-glycerol 3-phosphocholine + a fatty acid + H(+). Its function is as follows. Catalyzes the release of fatty acids from lysophospholipids. In Schizosaccharomyces pombe (strain 972 / ATCC 24843) (Fission yeast), this protein is Probable lysophospholipase 3 (plb3).